The chain runs to 414 residues: 3-ketoacyl-CoA thiolase, peroxisomal (414 aa).

The transit peptide at 1-9 (MDRLNNLAT) directs the protein to the peroxisome. Residues 1–9 (MDRLNNLAT) are PTS2-type peroxisomal targeting signal. The active-site Acyl-thioester intermediate is the cysteine 115. Catalysis depends on proton acceptor residues histidine 370 and cysteine 400.

Belongs to the thiolase-like superfamily. Thiolase family. In terms of assembly, homodimer. Interacts (via PTS2-type peroxisomal targeting signal region) with PEX7; leading to its translocation into peroxisomes.

It is found in the peroxisome. The catalysed reaction is an acyl-CoA + acetyl-CoA = a 3-oxoacyl-CoA + CoA. It functions in the pathway lipid metabolism; fatty acid metabolism. In terms of biological role, responsible for the thiolytic cleavage of straight chain 3-keto fatty acyl-CoAs (3-oxoacyl-CoAs). The polypeptide is 3-ketoacyl-CoA thiolase, peroxisomal (POT1) (Yarrowia lipolytica (strain CLIB 122 / E 150) (Yeast)).